A 42-amino-acid polypeptide reads, in one-letter code: Photosystem I reaction center subunit IX (42 aa).

The chain crosses the membrane as a helical span at residues Tyr7–Ile27.

This sequence belongs to the PsaJ family.

It is found in the plastid membrane. May help in the organization of the PsaE and PsaF subunits. This is Photosystem I reaction center subunit IX from Aneura mirabilis (Parasitic liverwort).